A 281-amino-acid chain; its full sequence is UPF0750 membrane protein YvjA (281 aa).

A run of 5 helical transmembrane segments spans residues 14–34, 56–76, 77–97, 108–128, and 149–169; these read YVYI…FLLP, AAYV…ILLG, GKFG…VFLT, LLAA…VYLG, and SLGK…MIVF.

Belongs to the UPF0750 family.

It is found in the cell membrane. The sequence is that of UPF0750 membrane protein YvjA (yvjA) from Bacillus subtilis (strain 168).